Reading from the N-terminus, the 928-residue chain is MDESSRIASSSALHGLDEMVSAHKPSPPLPSRRKGKSALRSALEKKNRKSKSKPKVTITSDTPKVSSQHSPVSSAYTGDSTTDLDSKSGHSSSQKLSNKVSSALKLTIPKRWRSSKSSSSQCSSPFLPTSSSNGHGDDASLNLPDKKSRPSSQSSIFLSNWSTIFSSNASPTDSQLSPTHTSTIAELAASTLSIFPSGSYAGSTFGSPSRSSIDSSTYLPRSKSVNSLSSNFSARTPASNQSSVSEDFGAAPNCDHKHNSVTLSDFALPDIDQHDTVETILEKVEFTIPKQFTPAILSQGTSSLLKLCLRKYLSVVNFKCISLDMALRKFLAVYVLPNETQQIDRVLSTFSDQYFHCNPDLYDSSDECYILTFSLMILHTDFFNIHNRQKMTRAEFISNTNLPTILPEILECFYDNITYTPFVHVEHIGCVVTSPSNEKPSLSQRLGDSQFRLTKRNTFATESDHQALQEQLTGFRINLDSILDLKKIDSVRTSIESPTRTADDLYKEFARAPFLQIVSHRSQPQAFSYHFEPSAESESTNPAIINVKVFKLGILIQNEKVRKDRLLSNREVGVILTSSQLMFFKNVYWISGLLDQLEDFKRSHSFSPCYFSPHLTSLSADYIIPLSDLVAYGDGSRIENELYSFSVKQKNQRTHVFSVTNVDELNDWLVKINFVSTFATAGLAPRERLPCVESSDKSIKASVSVLPDIYEDSDAMSKASKETRSEVLECSKVRVYIVQNRIYKLEEALRQGESKMTVQRRNAANILHLEPIQSRTRIRLARCSNTLKKNMLAQMIEIQKFKISIKFLKEDLEMDSHLQDYLRSVFPSSVMGKENASEDTILESNFRNHSNPSVRRSNLRVGKTVESVQNTKLKSVENDSGKAETETVGKNPEVVRKSPAKLPNIANIMTVNGHRYSVVELPDDFLRE.

Polar residues-rich tracts occupy residues 1–12 (MDESSRIASSSA) and 57–83 (TITSDTPKVSSQHSPVSSAYTGDSTTD). 2 disordered regions span residues 1-152 (MDES…RPSS) and 227-249 (SLSSNFSARTPASNQSSVSEDFG). At Ser67 the chain carries Phosphoserine. Composition is skewed to low complexity over residues 89-102 (GHSSSQKLSNKVSS) and 115-132 (SKSSSSQCSSPFLPTSSS). The 193-residue stretch at 228 to 420 (LSSNFSARTP…ECFYDNITYT (193 aa)) folds into the SEC7 domain. Residues 234–245 (ARTPASNQSSVS) are compositionally biased toward polar residues. Residues 548 to 677 (KVFKLGILIQ…WLVKINFVST (130 aa)) form the PH domain.

Its subcellular location is the cytoplasm. The protein resides in the cell tip. Its function is as follows. Guanine nucleotide exchange factor for Arf GTPases, stimulating the nucleotide exchange from the GDP-bound to the GTP-bound form. Involved in vesicular transport. This chain is Arf guanine nucleotide exchange factor sec74 (sec74), found in Schizosaccharomyces pombe (strain 972 / ATCC 24843) (Fission yeast).